The primary structure comprises 158 residues: NADH-quinone oxidoreductase subunit B (158 aa).

Positions 37, 38, 102, and 132 each coordinate [4Fe-4S] cluster.

Belongs to the complex I 20 kDa subunit family. NDH-1 is composed of 14 different subunits. Subunits NuoB, C, D, E, F, and G constitute the peripheral sector of the complex. Requires [4Fe-4S] cluster as cofactor.

Its subcellular location is the cell inner membrane. The catalysed reaction is a quinone + NADH + 5 H(+)(in) = a quinol + NAD(+) + 4 H(+)(out). Functionally, NDH-1 shuttles electrons from NADH, via FMN and iron-sulfur (Fe-S) centers, to quinones in the respiratory chain. Couples the redox reaction to proton translocation (for every two electrons transferred, four hydrogen ions are translocated across the cytoplasmic membrane), and thus conserves the redox energy in a proton gradient. The sequence is that of NADH-quinone oxidoreductase subunit B from Legionella pneumophila (strain Corby).